The chain runs to 114 residues: Protein Tat (114 aa).

The tract at residues 1–24 (MDPVDPEVPPWHHPGSQPQIPCNN) is interaction with human CREBBP. The interval 1–48 (MDPVDPEVPPWHHPGSQPQIPCNNCYCKRCCYHCYVCFVRKGLGISYG) is transactivation. 3 residues coordinate Zn(2+): C22, C25, and C27. The segment at 22–37 (CNNCYCKRCCYHCYVC) is cysteine-rich. K28 carries the post-translational modification N6-acetyllysine; by host PCAF. Residues C30, H33, C34, and C37 each coordinate Zn(2+). Residues 38–48 (FVRKGLGISYG) are core. The segment at 48-114 (GRKKRGRPAA…CHCCTRTSEQ (67 aa)) is disordered. The Nuclear localization signal, RNA-binding (TAR), and protein transduction motif lies at 49–56 (RKKRGRPA). The tract at residues 49–84 (RKKRGRPAAASHPDHKDPVPKQSPTITKRKQERQEE) is interaction with the host capping enzyme RNGTT. 2 positions are modified to N6-acetyllysine; by host EP300 and GCN5L2: K50 and K51. R52 carries the asymmetric dimethylarginine; by host PRMT6 modification. K69 participates in a covalent cross-link: Glycyl lysine isopeptide (Lys-Gly) (interchain with G-Cter in ubiquitin).

Belongs to the lentiviruses Tat family. Interacts with host CCNT1. Associates with the P-TEFb complex composed at least of Tat, P-TEFb (CDK9 and CCNT1), TAR RNA, RNA Pol II. Recruits the HATs CREBBP, TAF1/TFIID, EP300, PCAF and GCN5L2. Interacts with host KAT5/Tip60; this interaction targets the latter to degradation. Interacts with the host deacetylase SIRT1. Interacts with host capping enzyme RNGTT; this interaction stimulates RNGTT. Binds to host KDR, and to the host integrins ITGAV/ITGB3 and ITGA5/ITGB1. Interacts with host KPNB1/importin beta-1 without previous binding to KPNA1/importin alpha-1. Interacts with EIF2AK2. Interacts with host nucleosome assembly protein NAP1L1; this interaction may be required for the transport of Tat within the nucleus, since the two proteins interact at the nuclear rim. Interacts with host C1QBP/SF2P32; this interaction involves lysine-acetylated Tat. Interacts with the host chemokine receptors CCR2, CCR3 and CXCR4. Interacts with host DPP4/CD26; this interaction may trigger an anti-proliferative effect. Interacts with host LDLR. Interacts with the host extracellular matrix metalloproteinase MMP1. Interacts with host PRMT6; this interaction mediates Tat's methylation. Interacts with, and is ubiquitinated by MDM2/Hdm2. Interacts with host PSMC3 and HTATIP2. Interacts with STAB1; this interaction may overcome SATB1-mediated repression of IL2 and IL2RA (interleukin) in T cells by binding to the same domain than HDAC1. Interacts (when acetylated) with human CDK13, thereby increasing HIV-1 mRNA splicing and promoting the production of the doubly spliced HIV-1 protein Nef. Interacts with host TBP; this interaction modulates the activity of transcriptional pre-initiation complex. Interacts with host RELA. Interacts with host PLSCR1; this interaction negatively regulates Tat transactivation activity by altering its subcellular distribution. In terms of processing, asymmetrical arginine methylation by host PRMT6 seems to diminish the transactivation capacity of Tat and affects the interaction with host CCNT1. Acetylation by EP300, CREBBP, GCN5L2/GCN5 and PCAF regulates the transactivation activity of Tat. EP300-mediated acetylation of Lys-50 promotes dissociation of Tat from the TAR RNA through the competitive binding to PCAF's bromodomain. In addition, the non-acetylated Tat's N-terminus can also interact with PCAF. PCAF-mediated acetylation of Lys-28 enhances Tat's binding to CCNT1. Lys-50 is deacetylated by SIRT1. Post-translationally, polyubiquitination by host MDM2 does not target Tat to degradation, but activates its transactivation function and fosters interaction with CCNT1 and TAR RNA. In terms of processing, phosphorylated by EIF2AK2 on serine and threonine residues adjacent to the basic region important for TAR RNA binding and function. Phosphorylation of Tat by EIF2AK2 is dependent on the prior activation of EIF2AK2 by dsRNA.

The protein localises to the host nucleus. Its subcellular location is the host nucleolus. The protein resides in the host cytoplasm. It localises to the secreted. Its function is as follows. Transcriptional activator that increases RNA Pol II processivity, thereby increasing the level of full-length viral transcripts. Recognizes a hairpin structure at the 5'-LTR of the nascent viral mRNAs referred to as the transactivation responsive RNA element (TAR) and recruits the cyclin T1-CDK9 complex (P-TEFb complex) that will in turn hyperphosphorylate the RNA polymerase II to allow efficient elongation. The CDK9 component of P-TEFb and other Tat-activated kinases hyperphosphorylate the C-terminus of RNA Pol II that becomes stabilized and much more processive. Other factors such as HTATSF1/Tat-SF1, SUPT5H/SPT5, and HTATIP2 are also important for Tat's function. Besides its effect on RNA Pol II processivity, Tat induces chromatin remodeling of proviral genes by recruiting the histone acetyltransferases (HATs) CREBBP, EP300 and PCAF to the chromatin. This also contributes to the increase in proviral transcription rate, especially when the provirus integrates in transcriptionally silent region of the host genome. To ensure maximal activation of the LTR, Tat mediates nuclear translocation of NF-kappa-B by interacting with host RELA. Through its interaction with host TBP, Tat may also modulate transcription initiation. Tat can reactivate a latently infected cell by penetrating in it and transactivating its LTR promoter. In the cytoplasm, Tat is thought to act as a translational activator of HIV-1 mRNAs. Extracellular circulating Tat can be endocytosed by surrounding uninfected cells via the binding to several surface receptors such as CD26, CXCR4, heparan sulfate proteoglycans (HSPG) or LDLR. Neurons are rarely infected, but they internalize Tat via their LDLR. Through its interaction with nuclear HATs, Tat is potentially able to control the acetylation-dependent cellular gene expression. Modulates the expression of many cellular genes involved in cell survival, proliferation or in coding for cytokines or cytokine receptors. Tat plays a role in T-cell and neurons apoptosis. Tat induced neurotoxicity and apoptosis probably contribute to neuroAIDS. Circulating Tat also acts as a chemokine-like and/or growth factor-like molecule that binds to specific receptors on the surface of the cells, affecting many cellular pathways. In the vascular system, Tat binds to ITGAV/ITGB3 and ITGA5/ITGB1 integrins dimers at the surface of endothelial cells and competes with bFGF for heparin-binding sites, leading to an excess of soluble bFGF. The chain is Protein Tat from Homo sapiens (Human).